The primary structure comprises 89 residues: Small ribosomal subunit protein uS15 (89 aa).

It belongs to the universal ribosomal protein uS15 family. Part of the 30S ribosomal subunit. Forms a bridge to the 50S subunit in the 70S ribosome, contacting the 23S rRNA.

Functionally, one of the primary rRNA binding proteins, it binds directly to 16S rRNA where it helps nucleate assembly of the platform of the 30S subunit by binding and bridging several RNA helices of the 16S rRNA. Forms an intersubunit bridge (bridge B4) with the 23S rRNA of the 50S subunit in the ribosome. This Klebsiella pneumoniae (strain 342) protein is Small ribosomal subunit protein uS15.